A 138-amino-acid chain; its full sequence is Large ribosomal subunit protein bL19 (138 aa).

The protein belongs to the bacterial ribosomal protein bL19 family.

In terms of biological role, this protein is located at the 30S-50S ribosomal subunit interface and may play a role in the structure and function of the aminoacyl-tRNA binding site. This is Large ribosomal subunit protein bL19 (rplS) from Rickettsia prowazekii (strain Madrid E).